Here is a 204-residue protein sequence, read N- to C-terminus: General stress protein Ctc (204 aa).

The segment at 177 to 204 (ILPPQQQEAAEVDEEESADAQPEGENEQ) is disordered. The segment covering 186–204 (AEVDEEESADAQPEGENEQ) has biased composition (acidic residues).

Belongs to the bacterial ribosomal protein bL25 family. CTC subfamily. As to quaternary structure, part of the ribosome (presumably the 50S subunit) under heat-stress but not control growth conditions. Binds 5S rRNA.

Functionally, not required for exponential growth; probably functions in vegetatively growing cells, maybe required for accurate translation under stress conditions. The chain is General stress protein Ctc from Bacillus subtilis (strain 168).